The following is a 396-amino-acid chain: MAKLNAYFGEFGGQFVPQILVPALDQLEQAFIDAQQDDAFRAEFMSLLQEYAGRPTALTLTQNITKGTKTKLYLKREDLLHGGAHKTNQVLGQALLAKRMGKHEIIAETGAGQHGVATALACALLGLKCRVYMGAKDVERQSPNVFRMRLMGATVIPVHSGSATLKDACNEALRDWSASYETAHYLLGTAAGPHPFPTIVREFQRIIGEETKNQILAREGRLPDAVIACVGGGSNAIGMFADFIEEESVRLIGIEPAGKGIHTHQHGAPLKHGKTGIFFGMKAPLMQDEHGQVEESYSVSAGLDFPSVGPQHAYLNAIGRAEYESITDDEALDAFQALARNEGIIPALESSHALAHAIKMAYAEPDKEQLLVVNLSGRGDKDIFTVHKLLEDKGAL.

Residue Lys86 is modified to N6-(pyridoxal phosphate)lysine.

Belongs to the TrpB family. As to quaternary structure, tetramer of two alpha and two beta chains. Pyridoxal 5'-phosphate serves as cofactor.

It carries out the reaction (1S,2R)-1-C-(indol-3-yl)glycerol 3-phosphate + L-serine = D-glyceraldehyde 3-phosphate + L-tryptophan + H2O. It functions in the pathway amino-acid biosynthesis; L-tryptophan biosynthesis; L-tryptophan from chorismate: step 5/5. The beta subunit is responsible for the synthesis of L-tryptophan from indole and L-serine. The chain is Tryptophan synthase beta chain from Vibrio cholerae serotype O1 (strain ATCC 39315 / El Tor Inaba N16961).